We begin with the raw amino-acid sequence, 378 residues long: UPF0754 membrane protein BCE_0952 (378 aa).

The next 2 helical transmembrane spans lie at 1-21 and 357-377; these read MNIW…GGFT and YLGA…LLFL.

This sequence belongs to the UPF0754 family.

Its subcellular location is the cell membrane. The sequence is that of UPF0754 membrane protein BCE_0952 from Bacillus cereus (strain ATCC 10987 / NRS 248).